A 356-amino-acid polypeptide reads, in one-letter code: tRNA N6-adenosine threonylcarbamoyltransferase (356 aa).

Fe cation contacts are provided by His116 and His120. Residues Ile139–Gly143, Asp174, Gly187, Asp191, and Asn281 each bind substrate. Asp309 contributes to the Fe cation binding site.

It belongs to the KAE1 / TsaD family. The cofactor is Fe(2+).

It localises to the cytoplasm. The enzyme catalyses L-threonylcarbamoyladenylate + adenosine(37) in tRNA = N(6)-L-threonylcarbamoyladenosine(37) in tRNA + AMP + H(+). Its function is as follows. Required for the formation of a threonylcarbamoyl group on adenosine at position 37 (t(6)A37) in tRNAs that read codons beginning with adenine. Is involved in the transfer of the threonylcarbamoyl moiety of threonylcarbamoyl-AMP (TC-AMP) to the N6 group of A37, together with TsaE and TsaB. TsaD likely plays a direct catalytic role in this reaction. The polypeptide is tRNA N6-adenosine threonylcarbamoyltransferase (Frankia casuarinae (strain DSM 45818 / CECT 9043 / HFP020203 / CcI3)).